Here is a 184-residue protein sequence, read N- to C-terminus: ATP synthase subunit b, chloroplastic (184 aa).

A helical membrane pass occupies residues 27–49 (LATNLINLSVVLGVLIFFGKGVL).

Belongs to the ATPase B chain family. As to quaternary structure, F-type ATPases have 2 components, F(1) - the catalytic core - and F(0) - the membrane proton channel. F(1) has five subunits: alpha(3), beta(3), gamma(1), delta(1), epsilon(1). F(0) has four main subunits: a(1), b(1), b'(1) and c(10-14). The alpha and beta chains form an alternating ring which encloses part of the gamma chain. F(1) is attached to F(0) by a central stalk formed by the gamma and epsilon chains, while a peripheral stalk is formed by the delta, b and b' chains.

It is found in the plastid. The protein resides in the chloroplast thylakoid membrane. F(1)F(0) ATP synthase produces ATP from ADP in the presence of a proton or sodium gradient. F-type ATPases consist of two structural domains, F(1) containing the extramembraneous catalytic core and F(0) containing the membrane proton channel, linked together by a central stalk and a peripheral stalk. During catalysis, ATP synthesis in the catalytic domain of F(1) is coupled via a rotary mechanism of the central stalk subunits to proton translocation. Functionally, component of the F(0) channel, it forms part of the peripheral stalk, linking F(1) to F(0). This Spinacia oleracea (Spinach) protein is ATP synthase subunit b, chloroplastic.